The sequence spans 286 residues: Aldo-keto reductase MAV_4483 (286 aa).

Tyr-61 acts as the Proton donor in catalysis. Residues Leu-201, Val-203, Val-239, Arg-241, Ser-242, Arg-247, and Asn-251 each coordinate NADPH.

This sequence belongs to the aldo/keto reductase family.

This chain is Aldo-keto reductase MAV_4483, found in Mycobacterium avium (strain 104).